Here is a 24-residue protein sequence, read N- to C-terminus: Homotarsinin (24 aa).

An Arginine amide modification is found at R24.

In terms of assembly, homodimer; disulfide-linked. Expressed by the skin glands.

It is found in the secreted. Antimicrobial peptide. Active against Gram-negative bacteria E.coli ATCC 25922 (MIC=1.5 uM) and P.aeruginosa ATTC 27853 (MIC=23.2 uM) and against Gram-positive bacterium S.aureus ATCC 29313 (MIC=11.6 uM). Has no hemolytic activity. Associates with and disrupts membranes in vitro. The chain is Homotarsinin from Phyllomedusa tarsius (Brownbelly leaf frog).